We begin with the raw amino-acid sequence, 431 residues long: tRNA(Ile)-lysidine synthase (431 aa).

ATP is bound at residue Ser-26–Ser-31.

Belongs to the tRNA(Ile)-lysidine synthase family.

The protein localises to the cytoplasm. The enzyme catalyses cytidine(34) in tRNA(Ile2) + L-lysine + ATP = lysidine(34) in tRNA(Ile2) + AMP + diphosphate + H(+). Its function is as follows. Ligates lysine onto the cytidine present at position 34 of the AUA codon-specific tRNA(Ile) that contains the anticodon CAU, in an ATP-dependent manner. Cytidine is converted to lysidine, thus changing the amino acid specificity of the tRNA from methionine to isoleucine. This chain is tRNA(Ile)-lysidine synthase, found in Wolbachia sp. subsp. Brugia malayi (strain TRS).